Consider the following 248-residue polypeptide: 3-deoxy-manno-octulosonate cytidylyltransferase (248 aa).

This sequence belongs to the KdsB family.

It is found in the cytoplasm. It catalyses the reaction 3-deoxy-alpha-D-manno-oct-2-ulosonate + CTP = CMP-3-deoxy-beta-D-manno-octulosonate + diphosphate. Its pathway is nucleotide-sugar biosynthesis; CMP-3-deoxy-D-manno-octulosonate biosynthesis; CMP-3-deoxy-D-manno-octulosonate from 3-deoxy-D-manno-octulosonate and CTP: step 1/1. It participates in bacterial outer membrane biogenesis; lipopolysaccharide biosynthesis. Its function is as follows. Activates KDO (a required 8-carbon sugar) for incorporation into bacterial lipopolysaccharide in Gram-negative bacteria. This is 3-deoxy-manno-octulosonate cytidylyltransferase from Citrobacter koseri (strain ATCC BAA-895 / CDC 4225-83 / SGSC4696).